Reading from the N-terminus, the 268-residue chain is Movement protein (268 aa).

The segment at 218 to 246 (SDVRKGKISSSDRSAPNKNYRNVKDFGGM) is disordered. A compositionally biased stretch (polar residues) spans 225–237 (ISSSDRSAPNKNY).

The protein belongs to the tobamovirus movement protein family. In terms of assembly, binds to host RBCS at the plasmodesmata; this interaction seems required for viral systemic movement. In resistant plants, interacts with host MBP2C at host microtubules; this interaction prevents virus cell to cell movement. In resistant plants, interacts with host resistance (R) protein (e.g. tomato ToMV resistance protein TM-2(2), AC Q71BG9) at the host plasma membrane; this interaction triggers host defense responses leading to programmed cell death.

The protein localises to the host cytoplasm. The protein resides in the host cytoskeleton. It localises to the host cell junction. It is found in the host plasmodesma. Its function is as follows. Transports viral genome to neighboring plant cells directly through plasmosdesmata, without any budding. The movement protein allows efficient cell to cell propagation, by bypassing the host cell wall barrier. Forms a ribonucleoprotein complex with viral RNA. Binds microtubules and modulates microtubule stability. Can bind double-stranded DNA. Triggers host hypersensitive defense reaction in incompatible plants harboring resistance (R) proteins. The polypeptide is Movement protein (MP) (Nicotiana tabacum (Common tobacco)).